Consider the following 298-residue polypeptide: UDP-N-acetylenolpyruvoylglucosamine reductase (298 aa).

Positions 26–191 (KTGGEAEYLA…LSATFSLTPG (166 aa)) constitute an FAD-binding PCMH-type domain. Arg170 is a catalytic residue. Ser220 functions as the Proton donor in the catalytic mechanism. Glu290 is an active-site residue.

This sequence belongs to the MurB family. The cofactor is FAD.

Its subcellular location is the cytoplasm. It carries out the reaction UDP-N-acetyl-alpha-D-muramate + NADP(+) = UDP-N-acetyl-3-O-(1-carboxyvinyl)-alpha-D-glucosamine + NADPH + H(+). It functions in the pathway cell wall biogenesis; peptidoglycan biosynthesis. Its function is as follows. Cell wall formation. The polypeptide is UDP-N-acetylenolpyruvoylglucosamine reductase (Lactobacillus helveticus (strain DPC 4571)).